Consider the following 216-residue polypeptide: Cytidylate kinase (216 aa).

7-15 serves as a coordination point for ATP; sequence GPSGTGKST.

Belongs to the cytidylate kinase family. Type 1 subfamily.

The protein resides in the cytoplasm. The catalysed reaction is CMP + ATP = CDP + ADP. It catalyses the reaction dCMP + ATP = dCDP + ADP. The polypeptide is Cytidylate kinase (Chlamydia trachomatis serovar D (strain ATCC VR-885 / DSM 19411 / UW-3/Cx)).